The following is a 391-amino-acid chain: uncharacterized protein (391 aa).

Helical transmembrane passes span 15–35 (LSFC…LPIL), 48–68 (FLIG…QIPF), 81–101 (IIFG…TNSI), 139–159 (IIGV…PIIA), 167–187 (IFWI…FLIP), 217–237 (FYLG…IIPY), 251–271 (IVYF…VFYF), 275–295 (FFLK…LLLF), 303–323 (ICLT…EIFF), 346–366 (TSQF…CTFF), and 369–389 (NHIF…SFFC).

Belongs to the major facilitator superfamily.

The protein resides in the cell membrane. This is an uncharacterized protein from Buchnera aphidicola subsp. Schizaphis graminum (strain Sg).